Consider the following 378-residue polypeptide: Probable S-(hydroxymethyl)glutathione dehydrogenase 1 (378 aa).

C47 is a Zn(2+) binding site. H48 provides a ligand contact to NAD(+). The Zn(2+) site is built by H69, E70, C99, C102, C105, C113, and C176. Residues 201-206 (GCGCVG), D225, 293-295 (IGV), and 318-320 (SAF) contribute to the NAD(+) site.

This sequence belongs to the zinc-containing alcohol dehydrogenase family. Class-III subfamily. Zn(2+) serves as cofactor.

It carries out the reaction a primary alcohol + NAD(+) = an aldehyde + NADH + H(+). The catalysed reaction is a secondary alcohol + NAD(+) = a ketone + NADH + H(+). The enzyme catalyses S-(hydroxymethyl)glutathione + NADP(+) = S-formylglutathione + NADPH + H(+). It catalyses the reaction S-(hydroxymethyl)glutathione + NAD(+) = S-formylglutathione + NADH + H(+). It carries out the reaction S-nitrosoglutathione + NADH + H(+) = S-(hydroxysulfenamide)glutathione + NAD(+). Its function is as follows. Oxidizes long-chain alcohols and, in the presence of glutathione, is able to oxidize formaldehyde. Also acts as a S-nitroso-glutathione reductase by catalyzing the NADH-dependent reduction of S-nitrosoglutathione, thereby regulating protein S-nitrosylation. This chain is Probable S-(hydroxymethyl)glutathione dehydrogenase 1, found in Schizosaccharomyces pombe (strain 972 / ATCC 24843) (Fission yeast).